The following is a 461-amino-acid chain: MSFRSILLTALLSLSFTNTMQAAHHHYHRYDDKLRRQYHKKDLPTQENVRKEFCNPYSHSSDPIPLSQQRGVLSPICDLVSECSFLNGISVRSLKQTLKNSAGTQVALDWSILPQWFNPRSSWAPKLSIRDLGYGKPQSLIEADSPCCQTCFNPSAAITIYDSSCGKGVVQVSYTLVRYWRETAALAGQTMMLAGSINDYPARQNIFSQLTFSQTFPNERVNLTVGQYSLYSIDGTLYNNDQQLGFISYALSQNPTATYSSGSLGAYLQVAPTESTCLQVGFQDAYNISGSSIKWNNLTKNKYNFHGYASWAPHCCLGPGQYSVLLYVTRKVPEQMMQTMGWSVNASQYISSKLYVFGRYSGVTGQLSPINRTYSFGLVSPNLLNRNPQDLFGVACAFNNIHASAFQNAQRKYETVIEGFATIGCGPYISFAPDFQLYLYPALRPNKQSARVYSVRANLAI.

Positions 1–22 are cleaved as a signal peptide; the sequence is MSFRSILLTALLSLSFTNTMQA.

It belongs to the OprB family.

It localises to the cell outer membrane. Its function is as follows. Facilitates L-arginine uptake, as part of the AaxABC system. The arginine uptake by the bacterium in the macrophage may be a virulence factor against the host innate immune response. The chain is Porin AaxA (aaxA) from Chlamydia muridarum (strain MoPn / Nigg).